Consider the following 129-residue polypeptide: Phosphomevalonate dehydratase small subunit (129 aa).

Ser-61 (proton acceptor) is an active-site residue.

It belongs to the AcnX type II small subunit family. Heterodimer composed of a large subunit (PMDh-L) and a small subunit (PMDh-S).

The catalysed reaction is (R)-5-phosphomevalonate = (2E)-3-methyl-5-phosphooxypent-2-enoate + H2O. Its pathway is isoprenoid biosynthesis; isopentenyl diphosphate biosynthesis via mevalonate pathway. In terms of biological role, component of a hydro-lyase that catalyzes the dehydration of mevalonate 5-phosphate (MVA5P) to form trans-anhydromevalonate 5-phosphate (tAHMP). Involved in the archaeal mevalonate (MVA) pathway, which provides fundamental precursors for isoprenoid biosynthesis, such as isopentenyl diphosphate (IPP) and dimethylallyl diphosphate (DMAPP). This Methanocaldococcus jannaschii (strain ATCC 43067 / DSM 2661 / JAL-1 / JCM 10045 / NBRC 100440) (Methanococcus jannaschii) protein is Phosphomevalonate dehydratase small subunit.